A 122-amino-acid polypeptide reads, in one-letter code: Sterile alpha motif domain-containing protein 13 (122 aa).

The SAM domain maps to 51–119 (WAVMDVVNYF…KPLQTKHLKN (69 aa)).

This Homo sapiens (Human) protein is Sterile alpha motif domain-containing protein 13 (SAMD13).